A 330-amino-acid polypeptide reads, in one-letter code: Global transcription regulator sge1 (330 aa).

Disordered stretches follow at residues 93 to 123 (PPGEKKRARGRNGKSTTQSGGITKSRPRNSV) and 239 to 306 (QYAP…HQPQ). The span at 105–114 (GKSTTQSGGI) shows a compositional bias: polar residues. A compositionally biased stretch (low complexity) spans 250–306 (QQPALQQQPQQQPQPQHQPQLQYQPQPHQHQPQLQYQPQQQHQPQQQYRPQPQHQPQ).

This sequence belongs to the MIT1/WOR1 family.

The protein localises to the nucleus. Its function is as follows. Global transcriptional regulator of pathogenicity. Acts as an activator of parasitic growth. Not essential for colonization or penetration of the root surface, but required for expression of genes encoding effectors that are secreted during infection. Involved in conidiogenesis, but is not required for conidial fitness, overall (colony) morphology, vegetative growth or carbon source utilization. This chain is Global transcription regulator sge1, found in Fusarium oxysporum f. sp. lycopersici (strain 4287 / CBS 123668 / FGSC 9935 / NRRL 34936) (Fusarium vascular wilt of tomato).